The sequence spans 326 residues: MIRAYEQNPQHFIEDLEKVRVEQLTGHGSSVLEELVQLVKDKNIDISIKYDPRKDSEVFANRVITDDIELLKKILAYFLPEDAILKGGHYDNQLQNGIKRVKEFLESSPNTQWELRAFMAVIHFSLTADRIDDDILKVIVDSMNHHGDARSKLREELAELTAELKIYSVIQAEINKHLSSGGTINIHDKSINLMDKNLYGYTDEEIFKASAEYKILEKMPQTTIQEGETEKKIVSIKNFLESEKKRTGALGNLKDSYSYNKDNNELSHFATTCSDKSRPLNDLVSQKTTQLSDITSRFNSAIEALNRFIQKYDSVMQRLLDDTSGK.

It localises to the secreted. Functionally, involved in calcium regulation of yop expression, which includes the export process. The chain is Virulence-associated V antigen (lcrV) from Yersinia pseudotuberculosis serotype I (strain IP32953).